The sequence spans 89 residues: Progonadoliberin-1 (89 aa).

The first 23 residues, methionine 1 to alanine 23, serve as a signal peptide directing secretion. Glutamine 24 carries the pyrrolidone carboxylic acid modification. Glycine 33 is modified (glycine amide).

The protein belongs to the GnRH family. Expressed in the forebrain from larval stages.

The protein localises to the secreted. In terms of biological role, stimulates the secretion of gonadotropins. The polypeptide is Progonadoliberin-1 (gnrh1) (Xenopus laevis (African clawed frog)).